The sequence spans 184 residues: Muscle-specific protein 20 (184 aa).

Residues 17–122 form the Calponin-homology (CH) domain; it reads PEMDKEAQEW…NTIFALGRAT (106 aa). The stretch at 157–181 is one Calponin-like repeat; sequence VGLQAGSNKGATQAGQNLGAGRKIL.

It belongs to the calponin family. As to expression, found in synchronous muscle; not found in asynchronous indirect flight muscle.

The sequence is that of Muscle-specific protein 20 (Mp20) from Drosophila melanogaster (Fruit fly).